Reading from the N-terminus, the 1074-residue chain is Phospholipase D1 (1074 aa).

In terms of domain architecture, PX spans 81–212 (IKAQVLEVER…TEFLDVSQLS (132 aa)). The region spanning 219 to 328 (PKGLEGMIMK…WGGAIEEFIR (110 aa)) is the PH domain. 2 S-palmitoyl cysteine lipidation sites follow: Cys240 and Cys241. The PLD phosphodiesterase 1 domain maps to 459–486 (YLWAHHEKLVIIDQSVAFVGGIDLAYGR). The catalytic stretch occupies residues 463 to 928 (HHEKLVIIDQ…MLGKRDSEMA (466 aa)). Phosphoserine is present on residues Ser499, Ser561, and Ser629. A PLD phosphodiesterase 2 domain is found at 891 to 918 (ELIYVHSKLLIADDNTVIIGSANINDRS).

Belongs to the phospholipase D family. In terms of assembly, interacts with PIP5K1B. Expressed in kidney, lung, and at a much lower levels, in brain, liver, heart, testis and spleen.

It localises to the cytoplasm. The protein localises to the perinuclear region. The protein resides in the endoplasmic reticulum membrane. It is found in the golgi apparatus membrane. Its subcellular location is the late endosome membrane. The enzyme catalyses a 1,2-diacyl-sn-glycero-3-phosphocholine + H2O = a 1,2-diacyl-sn-glycero-3-phosphate + choline + H(+). The catalysed reaction is ethanol + a 1,2-diacyl-sn-glycero-3-phosphocholine = 1,2-diacyl-sn-glycero-3-phosphoethanol + choline. It catalyses the reaction 1,2-dihexadecanoyl-sn-glycero-3-phosphocholine + H2O = 1,2-dihexadecanoyl-sn-glycero-3-phosphate + choline + H(+). Stimulated by phosphatidylinositol 4,5-bisphosphate and phosphatidylinositol 3,4,5-trisphosphate, activated by the phosphokinase C-alpha, by the ADP-ribosylation factor-1 (ARF-1), and to a lesser extent by GTP-binding proteins: RHO A, RAC-1 and CDC42. Inhibited by oleate. Functionally, function as phospholipase selectivefor phosphatidylcholine. Implicated as a critical step in numerous cellular pathways, including signal transduction, membrane trafficking, and the regulation of mitosis. May be involved in the regulation of perinuclear intravesicular membrane traffic. The protein is Phospholipase D1 of Mus musculus (Mouse).